A 187-amino-acid polypeptide reads, in one-letter code: Putative manganese efflux pump MntP (187 aa).

6 helical membrane-spanning segments follow: residues 8-28, 39-59, 65-85, 106-126, 131-151, and 166-186; these read FLSIGLAIDAFAVSLSSGFII, IALFFGIFQGVMPLIGWLTGL, LANFDHWIAFILLAAIGGKMI, LFALAIATSIDALAAGLGLSV, ILLACTLIASITFSLSFIGVF, and ILGGITLIGIGTKILVEGLII.

It belongs to the MntP (TC 9.B.29) family.

It localises to the cell inner membrane. In terms of biological role, probably functions as a manganese efflux pump. This is Putative manganese efflux pump MntP from Rippkaea orientalis (strain PCC 8801 / RF-1) (Cyanothece sp. (strain PCC 8801)).